A 513-amino-acid polypeptide reads, in one-letter code: Bifunctional purine biosynthesis protein PurH (513 aa).

The MGS-like domain occupies 1–146 (MPRFALLSVS…KNHAHLTILT (146 aa)).

This sequence belongs to the PurH family.

It catalyses the reaction (6R)-10-formyltetrahydrofolate + 5-amino-1-(5-phospho-beta-D-ribosyl)imidazole-4-carboxamide = 5-formamido-1-(5-phospho-D-ribosyl)imidazole-4-carboxamide + (6S)-5,6,7,8-tetrahydrofolate. The enzyme catalyses IMP + H2O = 5-formamido-1-(5-phospho-D-ribosyl)imidazole-4-carboxamide. Its pathway is purine metabolism; IMP biosynthesis via de novo pathway; 5-formamido-1-(5-phospho-D-ribosyl)imidazole-4-carboxamide from 5-amino-1-(5-phospho-D-ribosyl)imidazole-4-carboxamide (10-formyl THF route): step 1/1. It functions in the pathway purine metabolism; IMP biosynthesis via de novo pathway; IMP from 5-formamido-1-(5-phospho-D-ribosyl)imidazole-4-carboxamide: step 1/1. The chain is Bifunctional purine biosynthesis protein PurH from Synechococcus elongatus (strain ATCC 33912 / PCC 7942 / FACHB-805) (Anacystis nidulans R2).